Consider the following 257-residue polypeptide: 4-hydroxy-tetrahydrodipicolinate reductase (257 aa).

NAD(+) is bound by residues 11–16 and glutamate 37; that span reads GANGRM. Arginine 38 contacts NADP(+). NAD(+) contacts are provided by residues 86–88 and 110–113; these read GST and SGNY. Histidine 144 (proton donor/acceptor) is an active-site residue. Histidine 145 contributes to the (S)-2,3,4,5-tetrahydrodipicolinate binding site. Lysine 148 functions as the Proton donor in the catalytic mechanism. 154–155 lines the (S)-2,3,4,5-tetrahydrodipicolinate pocket; the sequence is GT.

Belongs to the DapB family.

It is found in the cytoplasm. It carries out the reaction (S)-2,3,4,5-tetrahydrodipicolinate + NAD(+) + H2O = (2S,4S)-4-hydroxy-2,3,4,5-tetrahydrodipicolinate + NADH + H(+). The enzyme catalyses (S)-2,3,4,5-tetrahydrodipicolinate + NADP(+) + H2O = (2S,4S)-4-hydroxy-2,3,4,5-tetrahydrodipicolinate + NADPH + H(+). The protein operates within amino-acid biosynthesis; L-lysine biosynthesis via DAP pathway; (S)-tetrahydrodipicolinate from L-aspartate: step 4/4. In terms of biological role, catalyzes the conversion of 4-hydroxy-tetrahydrodipicolinate (HTPA) to tetrahydrodipicolinate. The chain is 4-hydroxy-tetrahydrodipicolinate reductase from Caulobacter vibrioides (strain ATCC 19089 / CIP 103742 / CB 15) (Caulobacter crescentus).